The sequence spans 392 residues: G2/mitotic-specific cyclin-B2 (392 aa).

Belongs to the cyclin family. Cyclin AB subfamily. In terms of assembly, interacts with the CDK1 protein kinase to form a serine/threonine kinase holoenzyme complex also known as maturation promoting factor (MPF). The cyclin subunit imparts substrate specificity to the complex.

Essential for the control of the cell cycle at the G2/M (mitosis) transition. In Rana japonica (Japanese reddish frog), this protein is G2/mitotic-specific cyclin-B2 (CCNB2).